The primary structure comprises 193 residues: Protein THEM6 (193 aa).

The N-terminal stretch at 1–18 (MSWLVVLLILYVIWDVNY) is a signal peptide. N-linked (GlcNAc...) asparagine glycosylation occurs at Asn-149.

The protein belongs to the THEM6 family.

Its subcellular location is the secreted. This chain is Protein THEM6, found in Drosophila melanogaster (Fruit fly).